Consider the following 101-residue polypeptide: uncharacterized protein (101 aa).

Residues M1–K12 are compositionally biased toward basic residues. Disordered regions lie at residues M1–A30 and A65–K87. Low complexity predominate over residues A65–R78.

This is an uncharacterized protein from Eremothecium gossypii (strain ATCC 10895 / CBS 109.51 / FGSC 9923 / NRRL Y-1056) (Yeast).